Here is a 267-residue protein sequence, read N- to C-terminus: MSEVVIICSSSDPASSNIASRLLELAEWDEEGTLRFHRSYCMLCIEGELVGLRNLEDMLDRIGLSPRLIIFASRHISKEAVPWLGGHFTGVVREGSFELSRPAPYALKKLLMALQRHAPSTFRLSAEATHHGPVDLRTPSLFAEIGSCEQHWIDPAAGAAVARAILELESYEAHADETVLLGIGGGHYVQRQTELILSRPVAFGHMFSKYQASMLNVEAIKKAADLSGASGVYLDGKSFRSDERRRLEEIAASLDLNVMGIKEVRSL.

The protein belongs to the DtdA deacylase family. As to quaternary structure, monomer. Requires Zn(2+) as cofactor.

It catalyses the reaction a D-aminoacyl-tRNA + H2O = a tRNA + a D-alpha-amino acid + H(+). It carries out the reaction glycyl-tRNA(Ala) + H2O = tRNA(Ala) + glycine + H(+). D-aminoacyl-tRNA deacylase with broad substrate specificity. By recycling D-aminoacyl-tRNA to D-amino acids and free tRNA molecules, this enzyme counteracts the toxicity associated with the formation of D-aminoacyl-tRNA entities in vivo. The polypeptide is D-aminoacyl-tRNA deacylase (Methanothrix thermoacetophila (strain DSM 6194 / JCM 14653 / NBRC 101360 / PT) (Methanosaeta thermophila)).